The sequence spans 182 residues: Biotin carboxyl carrier protein of acetyl-CoA carboxylase (182 aa).

A disordered region spans residues 70–95; the sequence is AAPSPSPEPGTSRAADHAVTSSGSQP. Residues 104–180 enclose the Biotinyl-binding domain; that stretch reads LAEVASPMVG…EYNQPLMRIK (77 aa). K146 is subject to N6-biotinyllysine.

In terms of assembly, homodimer.

Its pathway is lipid metabolism; fatty acid biosynthesis. Functionally, this protein is a component of the acetyl coenzyme A carboxylase complex; first, biotin carboxylase catalyzes the carboxylation of the carrier protein and then the transcarboxylase transfers the carboxyl group to form malonyl-CoA. The protein is Biotin carboxyl carrier protein of acetyl-CoA carboxylase (accB) of Nostoc sp. (strain PCC 7120 / SAG 25.82 / UTEX 2576).